Here is a 71-residue protein sequence, read N- to C-terminus: Small ribosomal subunit protein bS18 (71 aa).

Belongs to the bacterial ribosomal protein bS18 family. As to quaternary structure, part of the 30S ribosomal subunit. Forms a tight heterodimer with protein bS6.

Its function is as follows. Binds as a heterodimer with protein bS6 to the central domain of the 16S rRNA, where it helps stabilize the platform of the 30S subunit. The sequence is that of Small ribosomal subunit protein bS18 from Microcystis aeruginosa (strain NIES-843 / IAM M-2473).